The following is a 267-amino-acid chain: MPADVMEKNSSSPVAATPASVSNTPDKPKTASEHRKSSKPIMEKRRRARINESLGQLKTLILDALKKDSSRHSKLEKADILEMTVKHLRNLQRVQMSAALSTDPSVLGKYRAGFSECMNEVTRFLSTCEGVNTDVRTRLLGHLANCMNQINGMNYPTQPQMPSAAAPHPAYGQPMVQLPGAAPQSSPAPIACKMGGPPVEAAKVYGGFQLVPAPDGQFAFLITNPAFPHNGSVIPVYTNSNVGTALPPSVSPSVMPSVTIDSVWRPW.

The disordered stretch occupies residues 1 to 43; that stretch reads MPADVMEKNSSSPVAATPASVSNTPDKPKTASEHRKSSKPIME. The span at 10 to 22 shows a compositional bias: low complexity; that stretch reads SSSPVAATPASVS. The span at 26–35 shows a compositional bias: basic and acidic residues; sequence DKPKTASEHR. Residues 34-91 form the bHLH domain; the sequence is HRKSSKPIMEKRRRARINESLGQLKTLILDALKKDSSRHSKLEKADILEMTVKHLRNL. The region spanning 110 to 143 is the Orange domain; it reads YRAGFSECMNEVTRFLSTCEGVNTDVRTRLLGHL. The WRPW motif motif lies at 264-267; that stretch reads WRPW.

As to quaternary structure, transcription repression requires formation of a complex with a corepressor protein of the Groucho/TLE family. Interacts with the bHLH protein hes2, and binds DNA in the form of a heterodimer with the bHLH protein hey1/hrt1. Interacts with the bHLH protein hes6; this interaction may inhibit the transcriptional repressor activity. As to expression, starting from late neurula stage, weakly expressed in midline neural cells, where expression is restricted to the superficial layer of the prospective floorplate. Expressed in the posterior somitic mesoderm (PSM) at tailbud stage. During early tailbud stages, broadly expressed within the pronephric mesoderm both around and inside the developing pronephros. During late tailbud to early tadpole stages, expressed more ventrally in the pronephros, and although initially expressed in both the lateral and medial layers, by these later stages expression is predominantly in the lateral layer. Pronephric expression is no longer detectable in late tadpoles (stage 35).

The protein resides in the nucleus. Transcriptional repressor of a subset of early mesodermal genes including myod1 and t/bra. Binds DNA on N-box motifs: 5'-CACNAG-3'. Acts as a negative regulator of myogenesis, mediating Notch signaling to repress expression of myod1. This Xenopus laevis (African clawed frog) protein is Transcription factor HES-1-A (hes1-a).